Reading from the N-terminus, the 876-residue chain is Protein TORMOZ EMBRYO DEFECTIVE (876 aa).

13 WD repeats span residues glycine 58–serine 97, glycine 100–tyrosine 139, glycine 142–lysine 183, lysine 190–threonine 229, leucine 255–glutamate 294, glutamate 308–glutamate 347, glycine 356–valine 396, glycine 399–valine 441, glycine 444–glutamate 484, alanine 497–threonine 536, glycine 539–glutamate 580, glycine 581–threonine 620, and glutamine 623–aspartate 662. Positions valine 816–valine 876 are disordered. Residues glutamate 819–valine 831 are compositionally biased toward basic and acidic residues. The short motif at serine 848 to lysine 855 is the Nuclear localization signal element. The span at arginine 849 to arginine 864 shows a compositional bias: basic residues.

In terms of tissue distribution, preferentially expressed in dividing cells in a variety of tissues and meristematic regions.

Its subcellular location is the nucleus. It is found in the nucleolus. Essential protein involved in the regulation of cell division planes during embryogenesis which defines cell patterning, especially longitudinal division planes of the proembryo, probably via the regulation of embryo patterning genes expression patterns. This Arabidopsis thaliana (Mouse-ear cress) protein is Protein TORMOZ EMBRYO DEFECTIVE.